The sequence spans 180 residues: Isopentenyl-diphosphate Delta-isomerase (180 aa).

Residues histidine 26 and histidine 32 each coordinate Mn(2+). One can recognise a Nudix hydrolase domain in the interval 30–168; the sequence is ALHLAFSVLL…PELFTAWFPQ (139 aa). The active site involves cysteine 70. Cysteine 70 is a binding site for Mg(2+). Position 72 (histidine 72) interacts with Mn(2+). Glutamate 90 is a binding site for Mg(2+). Residues glutamate 117 and glutamate 119 each coordinate Mn(2+). Glutamate 119 is a catalytic residue.

This sequence belongs to the IPP isomerase type 1 family. The cofactor is Mg(2+). It depends on Mn(2+) as a cofactor.

It localises to the cytoplasm. It catalyses the reaction isopentenyl diphosphate = dimethylallyl diphosphate. Its pathway is isoprenoid biosynthesis; dimethylallyl diphosphate biosynthesis; dimethylallyl diphosphate from isopentenyl diphosphate: step 1/1. Catalyzes the 1,3-allylic rearrangement of the homoallylic substrate isopentenyl (IPP) to its highly electrophilic allylic isomer, dimethylallyl diphosphate (DMAPP). This Photobacterium profundum (strain SS9) protein is Isopentenyl-diphosphate Delta-isomerase.